The sequence spans 919 residues: uncharacterized protein (919 aa).

Residues 1-15 (MEALILLSSQQSGSI) are compositionally biased toward low complexity. 6 disordered regions span residues 1–167 (MEAL…DLEN), 179–312 (RFKP…STPS), 415–491 (HIYE…RLSL), 553–739 (QQQQ…TIKP), 751–863 (THNE…NNII), and 883–906 (LNINHQDGPNSASSTPRLPTDHIN). Residues 16-25 (KNNCASTSDI) show a composition bias toward polar residues. 3 stretches are compositionally biased toward low complexity: residues 34–75 (IVIV…SSSS), 96–107 (SSPSSSPNTPKT), and 141–153 (TPTTTSTSTTPIK). Residues 154 to 167 (PVKDPKEKEKDLEN) are compositionally biased toward basic and acidic residues. Residues 186–292 (NNTNNNNNIN…QQSSPTSSQT (107 aa)) show a composition bias toward low complexity. Residues 420–433 (PNENNNGGSFQKPN) are compositionally biased toward polar residues. Composition is skewed to low complexity over residues 450–471 (GVSGSPSHSPRVSQSPRVPSHP), 553–564 (QQQQQQQQQSSS), 573–589 (SQPQNSSSPRQPSQTPQ), and 618–635 (HMPQSPHMPHSPHLMPHS). The segment covering 678 to 695 (YGSSPNLNGGKGSNNFLQ) has biased composition (polar residues). The span at 712 to 723 (SSVDSYSNSSPT) shows a compositional bias: low complexity. Residues 754-768 (ENYMSSPRQPLSPHN) show a composition bias toward polar residues. Basic and acidic residues predominate over residues 785–797 (PHEHCNYIDKNDE). Low complexity predominate over residues 798–863 (YYSNNNNNNN…NNNNNNNNII (66 aa)). Polar residues predominate over residues 883 to 899 (LNINHQDGPNSASSTPR).

This is an uncharacterized protein from Dictyostelium discoideum (Social amoeba).